Consider the following 267-residue polypeptide: 4-hydroxy-tetrahydrodipicolinate reductase (267 aa).

Residues 12-17 (GPRGRM), 100-102 (GTT), and 126-129 (APNF) contribute to the NAD(+) site. The active-site Proton donor/acceptor is His-156. Residue His-157 participates in (S)-2,3,4,5-tetrahydrodipicolinate binding. Lys-160 acts as the Proton donor in catalysis. Residue 166 to 167 (GT) coordinates (S)-2,3,4,5-tetrahydrodipicolinate.

The protein belongs to the DapB family.

It localises to the cytoplasm. The enzyme catalyses (S)-2,3,4,5-tetrahydrodipicolinate + NAD(+) + H2O = (2S,4S)-4-hydroxy-2,3,4,5-tetrahydrodipicolinate + NADH + H(+). The catalysed reaction is (S)-2,3,4,5-tetrahydrodipicolinate + NADP(+) + H2O = (2S,4S)-4-hydroxy-2,3,4,5-tetrahydrodipicolinate + NADPH + H(+). The protein operates within amino-acid biosynthesis; L-lysine biosynthesis via DAP pathway; (S)-tetrahydrodipicolinate from L-aspartate: step 4/4. Its function is as follows. Catalyzes the conversion of 4-hydroxy-tetrahydrodipicolinate (HTPA) to tetrahydrodipicolinate. The protein is 4-hydroxy-tetrahydrodipicolinate reductase of Bacillus licheniformis (strain ATCC 14580 / DSM 13 / JCM 2505 / CCUG 7422 / NBRC 12200 / NCIMB 9375 / NCTC 10341 / NRRL NRS-1264 / Gibson 46).